The primary structure comprises 218 residues: MGWEFFSLETLQELARQYGYGAVFFGIALENAGIPIPGETITLLGGFLAGSGDLSYGGVLIAAIAGAVLGDSCGYWVGRWGGWPLLTRAAQLFNIPQEKLDQARHKFSQNGAAAVFFGRFVTLLRIFAGPMAGIVRMPYGKFLLYNIGGASVWAAITVSLAYFLGRVVTIEQIIAWTTQFSWFALAAVVGMVGIYFVFHFLQKRFDQTIESTIGDRPQ.

The next 5 membrane-spanning stretches (helical) occupy residues Ile27–Ala49, Gly57–Val77, Val115–Val135, Phe142–Tyr162, and Phe180–Phe200.

This sequence belongs to the DedA family.

It localises to the cell membrane. This is an uncharacterized protein from Synechocystis sp. (strain ATCC 27184 / PCC 6803 / Kazusa).